A 646-amino-acid chain; its full sequence is Glutamine--tRNA ligase protein virJ (646 aa).

The interval 25–65 is disordered; the sequence is NELKKRIQKRARKAAAAANRSNAQQEKGNKPAANKPAAKPE. Over residues 38–61 the composition is skewed to low complexity; the sequence is AAAAANRSNAQQEKGNKPAANKPA. A 'HIGH' region motif is present at residues 98 to 108; the sequence is PEPNGYLHLGH. ATP is bound by residues 99–101 and 105–111; these read EPN and HLGHAKA. Residues aspartate 147 and tyrosine 296 each coordinate L-glutamine. ATP contacts are provided by residues threonine 315, 344-345, and 352-354; these read RL and MSK. The short motif at 351–355 is the 'KMSKS' region element; the sequence is IMSKR.

It belongs to the class-I aminoacyl-tRNA synthetase family.

The enzyme catalyses tRNA(Gln) + L-glutamine + ATP = L-glutaminyl-tRNA(Gln) + AMP + diphosphate. Its function is as follows. Glutamine--tRNA ligase; part of the gene cluster that mediates the biosynthesis of virensols and trichoxide, fungal natural products that contain or are derived from a salicylaldehyde core. VirJ does not seem to play any role in virensols and trichoxide biosynthesis. The chain is Glutamine--tRNA ligase protein virJ from Hypocrea virens (strain Gv29-8 / FGSC 10586) (Gliocladium virens).